A 653-amino-acid polypeptide reads, in one-letter code: uncharacterized protein (653 aa).

The next 2 membrane-spanning stretches (helical) occupy residues 39 to 59 (AMTT…LKLI) and 207 to 227 (AVFV…AFTI). An HAMP domain is found at 225-277 (FTITKPIRELLTGVKNIASGDFHQRISLPFGGELGALIFNFNEMAERLEKYEQ). Residues 286–356 (EKAKLETLVS…PALNDIVRKN (71 aa)) form the PAS domain. The region spanning 421 to 651 (NVSHELRTPL…CFFFDLIIAK (231 aa)) is the Histidine kinase domain. His424 carries the post-translational modification Phosphohistidine; by autocatalysis.

It localises to the plastid. The protein resides in the chloroplast membrane. It catalyses the reaction ATP + protein L-histidine = ADP + protein N-phospho-L-histidine.. This is an uncharacterized protein from Pyropia yezoensis (Susabi-nori).